The chain runs to 152 residues: D-aminoacyl-tRNA deacylase (152 aa).

A Gly-cisPro motif, important for rejection of L-amino acids motif is present at residues 138–139; that stretch reads GP.

The protein belongs to the DTD family. In terms of assembly, homodimer.

The protein resides in the cytoplasm. The enzyme catalyses glycyl-tRNA(Ala) + H2O = tRNA(Ala) + glycine + H(+). It carries out the reaction a D-aminoacyl-tRNA + H2O = a tRNA + a D-alpha-amino acid + H(+). An aminoacyl-tRNA editing enzyme that deacylates mischarged D-aminoacyl-tRNAs. Also deacylates mischarged glycyl-tRNA(Ala), protecting cells against glycine mischarging by AlaRS. Acts via tRNA-based rather than protein-based catalysis; rejects L-amino acids rather than detecting D-amino acids in the active site. By recycling D-aminoacyl-tRNA to D-amino acids and free tRNA molecules, this enzyme counteracts the toxicity associated with the formation of D-aminoacyl-tRNA entities in vivo and helps enforce protein L-homochirality. The polypeptide is D-aminoacyl-tRNA deacylase (Chloroherpeton thalassium (strain ATCC 35110 / GB-78)).